Reading from the N-terminus, the 511-residue chain is Ribonuclease Y (511 aa).

The chain crosses the membrane as a helical span at residues 3–23; sequence VGILIGIIILGVVGFIQYTLI. The region spanning 201 to 286 is the KH domain; it reads TVHVVALPND…EMVERAIKDV (86 aa). Residues 327 to 420 form the HD domain; that stretch reads VLKHSIEVSY…VQAADAISAA (94 aa).

The protein belongs to the RNase Y family.

The protein resides in the cell membrane. Functionally, endoribonuclease that initiates mRNA decay. This Clostridium perfringens (strain SM101 / Type A) protein is Ribonuclease Y.